The following is a 595-amino-acid chain: Pyranose dehydrogenase (595 aa).

The N-terminal stretch at 1 to 21 (MARFNARLFSIAILGFQVARS) is a signal peptide. N-linked (GlcNAc...) asparagine glycans are attached at residues Asn-95 and Asn-110. His-123 bears the Tele-8alpha-FAD histidine mark. 5 N-linked (GlcNAc...) asparagine glycosylation sites follow: Asn-195, Asn-337, Asn-367, Asn-502, and Asn-510. Catalysis depends on His-530, which acts as the Proton acceptor. N-linked (GlcNAc...) asparagine glycosylation is present at Asn-541. Residue His-574 is part of the active site.

This sequence belongs to the GMC oxidoreductase family. In terms of assembly, monomer. Requires FAD as cofactor. In terms of processing, N-glycosylated.

It is found in the secreted. The catalysed reaction is pyranose + acceptor = pyranos-2-ulose + reduced acceptor.. It catalyses the reaction pyranose + acceptor = pyranos-3-ulose + reduced acceptor.. The enzyme catalyses pyranose + acceptor = pyranos-2,3-diulose + reduced acceptor.. It carries out the reaction a pyranoside + acceptor = a pyranosid-3-ulose + reduced acceptor.. The catalysed reaction is a pyranoside + acceptor = a pyranosid-3,4-diulose + reduced acceptor.. In terms of biological role, catalyzes the single-oxidation or sequential double oxidation reaction of carbohydrates primarily at carbon-2 and/or carbon-3 with the concomitant reduction of the flavin. The enzyme exhibits a broad sugar substrate specificity, oxidizing different aldopyranoses to the corresponding C-1, C-2, C-3 or C-1,2, C-2,3 and C-3,4 (di)dehydro sugars with substrate-specific regioselectivity. Accepts only a narrow range of electron acceptors such as substituted benzoquinones and complexed metal ions and reacts extremely slowly with O(2) as acceptor. May play a role in the natural recycling of plant matter by oxidizing all major monosaccharides in lignocellulose and by reducing quinone compounds or reactive radical species generated during lignin depolymerization. This Agaricus campestris (Field mushroom) protein is Pyranose dehydrogenase.